Reading from the N-terminus, the 107-residue chain is Nucleoid-associated protein CE0210 (107 aa).

It belongs to the YbaB/EbfC family. In terms of assembly, homodimer.

It is found in the cytoplasm. The protein resides in the nucleoid. Functionally, binds to DNA and alters its conformation. May be involved in regulation of gene expression, nucleoid organization and DNA protection. This Corynebacterium efficiens (strain DSM 44549 / YS-314 / AJ 12310 / JCM 11189 / NBRC 100395) protein is Nucleoid-associated protein CE0210.